We begin with the raw amino-acid sequence, 1529 residues long: Slit homolog 2 protein (1529 aa).

The first 30 residues, Met1–Ala30, serve as a signal peptide directing secretion. In terms of domain architecture, LRRNT spans Gln31–Arg55. 6 LRR repeats span residues Asn56–Gly77, His80–Asp101, Glu104–Gly125, Lys128–Gly149, Asp152–Ala173, and Asp176–His197. Asn66 carries N-linked (GlcNAc...) asparagine glycosylation. Asn186 carries an N-linked (GlcNAc...) asparagine glycan. Positions Asn209–Gly259 constitute an LRRCT 1 domain. Positions Met264–Glu300 constitute an LRRNT 2 domain. Cys277 and Cys286 are joined by a disulfide. LRR repeat units follow at residues Thr301–Pro322, Lys325–Gly346, Ser349–Gly370, Ser373–Asp394, and Asn397–Pro418. In terms of domain architecture, LRRCT 2 spans Asn430–Ala480. Cystine bridges form between Cys434–Cys457, Cys436–Cys478, Cys506–Cys512, and Cys510–Cys519. Residues Ser497–Gln533 enclose the LRRNT 3 domain. LRR repeat units lie at residues Tyr534 to Lys555, Gln559 to Gly580, Gly583 to Gly604, Ser607 to Gly628, and Ser631 to Thr652. Asn564 carries an N-linked (GlcNAc...) asparagine glycan. N-linked (GlcNAc...) asparagine glycosylation is present at Asn623. In terms of domain architecture, LRRCT 3 spans Asn664–Asp714. Intrachain disulfides connect Cys668/Cys691, Cys670/Cys712, Cys727/Cys733, and Cys731/Cys740. Residues Asp718 to Arg754 enclose the LRRNT 4 domain. LRR repeat units follow at residues Asp755–Lys777, His778–Asn799, Gln802–Gly823, and Ser826–Asp847. Residues Asn794 and Asn799 are each glycosylated (N-linked (GlcNAc...) asparagine). Residues Asn859–Gly909 enclose the LRRCT 4 domain. 20 cysteine pairs are disulfide-bonded: Cys863/Cys886, Cys865/Cys907, Cys922/Cys933, Cys927/Cys943, Cys945/Cys954, Cys961/Cys972, Cys966/Cys984, Cys986/Cys995, Cys1002/Cys1013, Cys1007/Cys1022, Cys1024/Cys1033, Cys1040/Cys1053, Cys1047/Cys1062, Cys1064/Cys1073, Cys1080/Cys1091, Cys1085/Cys1100, Cys1102/Cys1111, Cys1125/Cys1136, Cys1130/Cys1145, and Cys1147/Cys1156. 2 EGF-like domains span residues Lys918–Asp955 and Pro957–Glu996. In terms of domain architecture, EGF-like 3; calcium-binding spans Asn998 to Glu1034. Residues Asn1009, Asn1010, and Asn1019 are each glycosylated (N-linked (GlcNAc...) asparagine). An EGF-like 4 domain is found at Lys1036 to Asp1074. In terms of domain architecture, EGF-like 5; calcium-binding spans Asp1076–Glu1112. In terms of domain architecture, EGF-like 6 spans Arg1121–Glu1157. In terms of domain architecture, Laminin G-like spans Val1160–Cys1333. N-linked (GlcNAc...) asparagine glycosylation is found at Asn1183, Asn1266, and Asn1300. Intrachain disulfides connect Cys1307–Cys1333, Cys1336–Cys1346, Cys1341–Cys1356, Cys1358–Cys1367, Cys1375–Cys1385, Cys1380–Cys1395, Cys1397–Cys1406, Cys1416–Cys1426, Cys1421–Cys1436, Cys1438–Cys1447, Cys1453–Cys1492, Cys1471–Cys1506, Cys1482–Cys1522, and Cys1486–Cys1524. Residues Gly1332–Asp1368 enclose the EGF-like 7 domain. The region spanning Cys1453 to Val1528 is the CTCK domain.

As to quaternary structure, interacts with GREM1. Homodimer. Binds ROBO1 and ROBO2 with high affinity. As to expression, fetal lung and kidney, and adult spinal cord. Weak expression in adult adrenal gland, thyroid, trachea and other tissues examined.

The protein resides in the secreted. Its function is as follows. Thought to act as molecular guidance cue in cellular migration, and function appears to be mediated by interaction with roundabout homolog receptors. During neural development involved in axonal navigation at the ventral midline of the neural tube and projection of axons to different regions. SLIT1 and SLIT2 seem to be essential for midline guidance in the forebrain by acting as repulsive signal preventing inappropriate midline crossing by axons projecting from the olfactory bulb. In spinal cord development may play a role in guiding commissural axons once they reached the floor plate by modulating the response to netrin. In vitro, silences the attractive effect of NTN1 but not its growth-stimulatory effect and silencing requires the formation of a ROBO1-DCC complex. May be implicated in spinal cord midline post-crossing axon repulsion. In vitro, only commissural axons that crossed the midline responded to SLIT2. In the developing visual system appears to function as repellent for retinal ganglion axons by providing a repulsion that directs these axons along their appropriate paths prior to, and after passage through, the optic chiasm. In vitro, collapses and repels retinal ganglion cell growth cones. Seems to play a role in branching and arborization of CNS sensory axons, and in neuronal cell migration. In vitro, Slit homolog 2 protein N-product, but not Slit homolog 2 protein C-product, repels olfactory bulb (OB) but not dorsal root ganglia (DRG) axons, induces OB growth cones collapse and induces branching of DRG axons. Seems to be involved in regulating leukocyte migration. In Homo sapiens (Human), this protein is Slit homolog 2 protein (SLIT2).